We begin with the raw amino-acid sequence, 258 residues long: Chymotrypsin-2 (258 aa).

Positions 1–17 (MLRKVFAVVSVLLVVSA) are cleaved as a signal peptide. Residues 18 to 32 (AKVTKLVLDDHYVNR) constitute a propeptide, activation peptide. Residues 33–255 (VVGGEVAKNG…YHEWVRTTMA (223 aa)) form the Peptidase S1 domain. The cysteines at positions 59 and 75 are disulfide-linked. Catalysis depends on charge relay system residues H74 and D119. 2 disulfides stabilise this stretch: C182–C198 and C208–C232. S212 (charge relay system) is an active-site residue.

Belongs to the peptidase S1 family. In terms of tissue distribution, after blood feeding, expression is induced in the midgut epithelium, followed by secretion into the midgut lumen.

The protein resides in the secreted. The catalysed reaction is Preferential cleavage: Tyr-|-Xaa, Trp-|-Xaa, Phe-|-Xaa, Leu-|-Xaa.. The sequence is that of Chymotrypsin-2 (CHYM2) from Anopheles gambiae (African malaria mosquito).